The following is a 328-amino-acid chain: Formimidoylglutamase (328 aa).

The Mn(2+) site is built by His-133, Asp-159, His-161, Asp-163, Asp-253, and Asp-255.

The protein belongs to the arginase family. Mn(2+) is required as a cofactor.

The catalysed reaction is N-formimidoyl-L-glutamate + H2O = formamide + L-glutamate. The protein operates within amino-acid degradation; L-histidine degradation into L-glutamate; L-glutamate from N-formimidoyl-L-glutamate (hydrolase route): step 1/1. Functionally, catalyzes the conversion of N-formimidoyl-L-glutamate to L-glutamate and formamide. The chain is Formimidoylglutamase from Streptococcus pyogenes serotype M3 (strain ATCC BAA-595 / MGAS315).